A 233-amino-acid chain; its full sequence is Membrane glycoprotein UL9 (233 aa).

The N-terminal stretch at 1–20 (MSKRLQVFPWITILFYTSKS) is a signal peptide. Asn40, Asn94, Asn101, Asn131, and Asn169 each carry an N-linked (GlcNAc...) asparagine; by host glycan. Residues 194-214 (MWIIPLVIVITIIVLICFKFP) traverse the membrane as a helical segment.

It belongs to the HHV-5 UL9 family.

The protein resides in the host membrane. The sequence is that of Membrane glycoprotein UL9 (UL9) from Homo sapiens (Human).